The chain runs to 138 residues: Homeobox protein HD-11 (138 aa).

The segment at residues 30-89 (CTGKQMRKTRLQTCVLNRIFEISRFPSSKTIVDLALLINVHPKSIQKWFQNTRQAIRKKG) is a DNA-binding region (homeobox).

It localises to the nucleus. This is Homeobox protein HD-11 (HD-11) from Encephalitozoon cuniculi (strain GB-M1) (Microsporidian parasite).